The following is a 319-amino-acid chain: Ribonuclease Z (319 aa).

Zn(2+)-binding residues include His62, His64, Asp66, His67, His139, Asp209, and His268. The active-site Proton acceptor is Asp66.

It belongs to the RNase Z family. As to quaternary structure, homodimer. Zn(2+) is required as a cofactor.

It carries out the reaction Endonucleolytic cleavage of RNA, removing extra 3' nucleotides from tRNA precursor, generating 3' termini of tRNAs. A 3'-hydroxy group is left at the tRNA terminus and a 5'-phosphoryl group is left at the trailer molecule.. In terms of biological role, zinc phosphodiesterase, which displays some tRNA 3'-processing endonuclease activity. Probably involved in tRNA maturation, by removing a 3'-trailer from precursor tRNA. The sequence is that of Ribonuclease Z from Pseudomonas putida (strain ATCC 47054 / DSM 6125 / CFBP 8728 / NCIMB 11950 / KT2440).